Reading from the N-terminus, the 249-residue chain is tRNA pseudouridine synthase A (249 aa).

Aspartate 53 serves as the catalytic Nucleophile. Residue tyrosine 111 coordinates substrate.

The protein belongs to the tRNA pseudouridine synthase TruA family. As to quaternary structure, homodimer.

It catalyses the reaction uridine(38/39/40) in tRNA = pseudouridine(38/39/40) in tRNA. In terms of biological role, formation of pseudouridine at positions 38, 39 and 40 in the anticodon stem and loop of transfer RNAs. The polypeptide is tRNA pseudouridine synthase A (Streptococcus pneumoniae (strain Taiwan19F-14)).